Here is a 226-residue protein sequence, read N- to C-terminus: Ribose-5-phosphate isomerase A (226 aa).

Substrate is bound by residues 29 to 32, 84 to 87, and 97 to 100; these read TGST, DGAD, and KGGG. Catalysis depends on Glu-106, which acts as the Proton acceptor. Lys-124 contributes to the substrate binding site.

The protein belongs to the ribose 5-phosphate isomerase family. As to quaternary structure, homodimer.

The catalysed reaction is aldehydo-D-ribose 5-phosphate = D-ribulose 5-phosphate. Its pathway is carbohydrate degradation; pentose phosphate pathway; D-ribose 5-phosphate from D-ribulose 5-phosphate (non-oxidative stage): step 1/1. Functionally, catalyzes the reversible conversion of ribose-5-phosphate to ribulose 5-phosphate. The protein is Ribose-5-phosphate isomerase A of Methanothermobacter thermautotrophicus (strain ATCC 29096 / DSM 1053 / JCM 10044 / NBRC 100330 / Delta H) (Methanobacterium thermoautotrophicum).